Here is a 159-residue protein sequence, read N- to C-terminus: Globin-like protein (159 aa).

Residues 1–152 (MSMNRQEISD…FNAESQTHLK (152 aa)) form the Globin domain. Residue His-101 participates in heme binding.

The protein belongs to the globin family. Homodimer. In terms of tissue distribution, expressed mainly in a subset of neuronal cells and in head muscular tissue.

The protein resides in the cytoplasm. In terms of biological role, may be a globin and may play a role in oxygen transport. The polypeptide is Globin-like protein (glb-1) (Caenorhabditis elegans).